The sequence spans 165 residues: NADPH-dependent 7-cyano-7-deazaguanine reductase (165 aa).

The active-site Thioimide intermediate is Cys-56. The active-site Proton donor is Asp-63. Residues 78 to 80 (VES) and 97 to 98 (HE) each bind substrate.

Belongs to the GTP cyclohydrolase I family. QueF type 1 subfamily.

The protein localises to the cytoplasm. It carries out the reaction 7-aminomethyl-7-carbaguanine + 2 NADP(+) = 7-cyano-7-deazaguanine + 2 NADPH + 3 H(+). Its pathway is tRNA modification; tRNA-queuosine biosynthesis. Functionally, catalyzes the NADPH-dependent reduction of 7-cyano-7-deazaguanine (preQ0) to 7-aminomethyl-7-deazaguanine (preQ1). The chain is NADPH-dependent 7-cyano-7-deazaguanine reductase from Geobacillus thermodenitrificans (strain NG80-2).